The following is a 142-amino-acid chain: Nucleoside diphosphate kinase (142 aa).

ATP-binding residues include K11, F59, R87, T93, R104, and N114. The Pros-phosphohistidine intermediate role is filled by H117.

This sequence belongs to the NDK family. As to quaternary structure, homotetramer. Mg(2+) is required as a cofactor.

The protein localises to the cytoplasm. It catalyses the reaction a 2'-deoxyribonucleoside 5'-diphosphate + ATP = a 2'-deoxyribonucleoside 5'-triphosphate + ADP. The catalysed reaction is a ribonucleoside 5'-diphosphate + ATP = a ribonucleoside 5'-triphosphate + ADP. Its function is as follows. Major role in the synthesis of nucleoside triphosphates other than ATP. The ATP gamma phosphate is transferred to the NDP beta phosphate via a ping-pong mechanism, using a phosphorylated active-site intermediate. This chain is Nucleoside diphosphate kinase, found in Marinobacter nauticus (strain ATCC 700491 / DSM 11845 / VT8) (Marinobacter aquaeolei).